Reading from the N-terminus, the 65-residue chain is Large ribosomal subunit protein bL33c (65 aa).

This sequence belongs to the bacterial ribosomal protein bL33 family.

It is found in the plastid. The protein resides in the chloroplast. This Psilotum nudum (Whisk fern) protein is Large ribosomal subunit protein bL33c.